A 548-amino-acid polypeptide reads, in one-letter code: Asparagine--tRNA ligase, cytoplasmic (548 aa).

Residues 1 to 25 (MVLAELYVSDREGSDATGDGTKEKP) are disordered. A compositionally biased stretch (basic and acidic residues) spans 8-25 (VSDREGSDATGDGTKEKP). A Phosphoserine modification is found at Ser-61. A disordered region spans residues 69 to 91 (MWHREQMKSESREKKEAEDSLRR). A compositionally biased stretch (basic and acidic residues) spans 71–91 (HREQMKSESREKKEAEDSLRR). Lys-244 is subject to N6-acetyllysine. Position 482 is a phosphoserine (Ser-482). The residue at position 490 (Lys-490) is an N6-acetyllysine.

Belongs to the class-II aminoacyl-tRNA synthetase family. In terms of assembly, homodimer.

The protein localises to the cytoplasm. The enzyme catalyses tRNA(Asn) + L-asparagine + ATP = L-asparaginyl-tRNA(Asn) + AMP + diphosphate + H(+). In terms of biological role, catalyzes the attachment of asparagine to tRNA(Asn) in a two-step reaction: asparagine is first activated by ATP to form Asn-AMP and then transferred to the acceptor end of tRNA(Asn). In addition to its essential role in protein synthesis, acts as a signaling molecule that induced migration of CCR3-expressing cells. Has an essential role in the development of the cerebral cortex, being required for proper proliferation of radial glial cells. The protein is Asparagine--tRNA ligase, cytoplasmic of Homo sapiens (Human).